A 332-amino-acid polypeptide reads, in one-letter code: MDSTSSLHGSSLHRPSTEQTRTDFSWDGINLSMEDTTSILPKLKRNSNAYGIGALAKSSFSGISRSMKDHVTKPTAMGQGRVAHMIEWQGWGKAPAIQPQHSHEAVRRDTDAYSDLSDGEKEARFLAGVMEQFAISEATLMAWSSMDGEDMSVNSTQEPLDCNYSDNYQELMESQDALAQAPMDGWPHSYVSQGMYCLGSSDAWEASDQSLIASPATGSYLGPAFDDSQPSLHDMGPSQPASGYSAQEPPPLLGVDTDWASEVGGVELARGPVEEEKRPLAPEEEEDAGCRDLESLSPREDPEMSTALSRKVSDVTSSGVQSFDEEEGDANN.

Residues 1 to 22 (MDSTSSLHGSSLHRPSTEQTRT) form a disordered region. Phosphoserine is present on residues serine 47, serine 114, and serine 117. Residues 221–332 (LGPAFDDSQP…FDEEEGDANN (112 aa)) form a disordered region. 2 stretches are compositionally biased toward basic and acidic residues: residues 272-281 (PVEEEKRPLA) and 288-302 (AGCR…REDP). A phosphoserine mark is found at serine 295, serine 297, and serine 313. Phosphothreonine is present on threonine 316. Residues serine 317, serine 318, and serine 322 each carry the phosphoserine modification. Residues 323 to 332 (FDEEEGDANN) show a composition bias toward acidic residues.

This sequence belongs to the FAM131 family.

This chain is Protein FAM131B (Fam131b), found in Rattus norvegicus (Rat).